Consider the following 257-residue polypeptide: Small ribosomal subunit protein eS1 (257 aa).

The segment at 237–257 is disordered; that stretch reads GADGEKVDRPDDYEPPVQQEV. Over residues 239–248 the composition is skewed to basic and acidic residues; sequence DGEKVDRPDD.

The protein belongs to the eukaryotic ribosomal protein eS1 family. Component of the small ribosomal subunit. Mature ribosomes consist of a small (40S) and a large (60S) subunit. The 40S subunit contains about 33 different proteins and 1 molecule of RNA (18S). The 60S subunit contains about 49 different proteins and 3 molecules of RNA (28S, 5.8S and 5S).

It is found in the cytoplasm. This is Small ribosomal subunit protein eS1 from Caenorhabditis elegans.